A 587-amino-acid chain; its full sequence is Aspartate--tRNA ligase (587 aa).

Glu173 is a binding site for L-aspartate. Residues 197–200 form an aspartate region; the sequence is QTLK. Residue Arg219 coordinates L-aspartate. ATP is bound by residues 219-221 and Gln228; that span reads RDE. His446 contacts L-aspartate. Glu480 lines the ATP pocket. Residue Arg487 coordinates L-aspartate. Residue 532–535 participates in ATP binding; sequence GLDR.

This sequence belongs to the class-II aminoacyl-tRNA synthetase family. Type 1 subfamily. Homodimer.

Its subcellular location is the cytoplasm. The catalysed reaction is tRNA(Asp) + L-aspartate + ATP = L-aspartyl-tRNA(Asp) + AMP + diphosphate. In terms of biological role, catalyzes the attachment of L-aspartate to tRNA(Asp) in a two-step reaction: L-aspartate is first activated by ATP to form Asp-AMP and then transferred to the acceptor end of tRNA(Asp). In Phocaeicola vulgatus (strain ATCC 8482 / DSM 1447 / JCM 5826 / CCUG 4940 / NBRC 14291 / NCTC 11154) (Bacteroides vulgatus), this protein is Aspartate--tRNA ligase.